Reading from the N-terminus, the 460-residue chain is GTPase Der (460 aa).

2 EngA-type G domains span residues 2 to 164 and 199 to 370; these read KKVI…DDEI and IKVG…ANFT. GTP contacts are provided by residues 8–15, 55–59, 116–119, 205–212, 252–256, and 316–319; these read GRPNVGKS, DSGGL, NKID, GRVNVGKS, DTAGI, and NKWD. The KH-like domain occupies 371 to 454; the sequence is QKIATSKLND…PVILLPRKRG (84 aa).

The protein belongs to the TRAFAC class TrmE-Era-EngA-EngB-Septin-like GTPase superfamily. EngA (Der) GTPase family. In terms of assembly, associates with the 50S ribosomal subunit.

Its function is as follows. GTPase that plays an essential role in the late steps of ribosome biogenesis. The sequence is that of GTPase Der from Campylobacter hominis (strain ATCC BAA-381 / DSM 21671 / CCUG 45161 / LMG 19568 / NCTC 13146 / CH001A).